A 118-amino-acid polypeptide reads, in one-letter code: Small ribosomal subunit protein uS13 (118 aa).

A disordered region spans residues 94–118; sequence SLPVHGQRTKTNARTCKGPRKPIKK.

The protein belongs to the universal ribosomal protein uS13 family. As to quaternary structure, part of the 30S ribosomal subunit. Forms a loose heterodimer with protein S19. Forms two bridges to the 50S subunit in the 70S ribosome.

Its function is as follows. Located at the top of the head of the 30S subunit, it contacts several helices of the 16S rRNA. In the 70S ribosome it contacts the 23S rRNA (bridge B1a) and protein L5 of the 50S subunit (bridge B1b), connecting the 2 subunits; these bridges are implicated in subunit movement. Contacts the tRNAs in the A and P-sites. In Buchnera aphidicola subsp. Acyrthosiphon pisum (strain 5A), this protein is Small ribosomal subunit protein uS13.